The primary structure comprises 387 residues: 3-ketoacyl-CoA thiolase (387 aa).

Cysteine 91 (acyl-thioester intermediate) is an active-site residue. Catalysis depends on proton acceptor residues histidine 343 and cysteine 373.

It belongs to the thiolase-like superfamily. Thiolase family. In terms of assembly, heterotetramer of two alpha chains (FadB) and two beta chains (FadA).

The protein resides in the cytoplasm. The catalysed reaction is an acyl-CoA + acetyl-CoA = a 3-oxoacyl-CoA + CoA. The protein operates within lipid metabolism; fatty acid beta-oxidation. Functionally, catalyzes the final step of fatty acid oxidation in which acetyl-CoA is released and the CoA ester of a fatty acid two carbons shorter is formed. The polypeptide is 3-ketoacyl-CoA thiolase (Shewanella sp. (strain MR-4)).